Here is a 352-residue protein sequence, read N- to C-terminus: Holliday junction branch migration complex subunit RuvB (352 aa).

The disordered stretch occupies residues 1-26; that stretch reads MIETDKLRAAAPERLISPQPADRQED. The interval 4–193 is large ATPase domain (RuvB-L); sequence TDKLRAAAPE…FGIVSRLEFY (190 aa). ATP contacts are provided by residues Leu-32, Arg-33, Gly-74, Lys-77, Thr-78, Thr-79, 140–142, Arg-183, Tyr-193, and Arg-230; that span reads EDF. Thr-78 is a Mg(2+) binding site. The interval 194 to 264 is small ATPAse domain (RuvB-S); that stretch reads TPDELGFIVS…VADAALRMLD (71 aa). The tract at residues 267 to 352 is head domain (RuvB-H); the sequence is SLGLDLMDRK…RPGGTDLFGG (86 aa). Arg-322 and Arg-327 together coordinate DNA.

Belongs to the RuvB family. In terms of assembly, homohexamer. Forms an RuvA(8)-RuvB(12)-Holliday junction (HJ) complex. HJ DNA is sandwiched between 2 RuvA tetramers; dsDNA enters through RuvA and exits via RuvB. An RuvB hexamer assembles on each DNA strand where it exits the tetramer. Each RuvB hexamer is contacted by two RuvA subunits (via domain III) on 2 adjacent RuvB subunits; this complex drives branch migration. In the full resolvosome a probable DNA-RuvA(4)-RuvB(12)-RuvC(2) complex forms which resolves the HJ.

The protein localises to the cytoplasm. It carries out the reaction ATP + H2O = ADP + phosphate + H(+). In terms of biological role, the RuvA-RuvB-RuvC complex processes Holliday junction (HJ) DNA during genetic recombination and DNA repair, while the RuvA-RuvB complex plays an important role in the rescue of blocked DNA replication forks via replication fork reversal (RFR). RuvA specifically binds to HJ cruciform DNA, conferring on it an open structure. The RuvB hexamer acts as an ATP-dependent pump, pulling dsDNA into and through the RuvAB complex. RuvB forms 2 homohexamers on either side of HJ DNA bound by 1 or 2 RuvA tetramers; 4 subunits per hexamer contact DNA at a time. Coordinated motions by a converter formed by DNA-disengaged RuvB subunits stimulates ATP hydrolysis and nucleotide exchange. Immobilization of the converter enables RuvB to convert the ATP-contained energy into a lever motion, pulling 2 nucleotides of DNA out of the RuvA tetramer per ATP hydrolyzed, thus driving DNA branch migration. The RuvB motors rotate together with the DNA substrate, which together with the progressing nucleotide cycle form the mechanistic basis for DNA recombination by continuous HJ branch migration. Branch migration allows RuvC to scan DNA until it finds its consensus sequence, where it cleaves and resolves cruciform DNA. In Azoarcus sp. (strain BH72), this protein is Holliday junction branch migration complex subunit RuvB.